The primary structure comprises 1728 residues: U3 small nucleolar RNA-associated protein 10 (1728 aa).

7 HEAT repeats span residues 540–578 (DKDF…LVKE), 881–926 (PANH…MMPA), 986–1024 (FMGS…AYEH), 1191–1229 (LLSI…SEST), 1235–1274 (REAL…KYGK), 1622–1662 (ADAT…GQAA), and 1683–1721 (LQAL…KLGE).

The protein belongs to the HEATR1/UTP10 family. As to quaternary structure, component of the ribosomal small subunit (SSU) processome.

It localises to the nucleus. The protein localises to the nucleolus. Involved in nucleolar processing of pre-18S ribosomal RNA. Involved in ribosome biosynthesis. The chain is U3 small nucleolar RNA-associated protein 10 from Chaetomium globosum (strain ATCC 6205 / CBS 148.51 / DSM 1962 / NBRC 6347 / NRRL 1970) (Soil fungus).